Consider the following 127-residue polypeptide: Small ribosomal subunit protein uS11 (127 aa).

This sequence belongs to the universal ribosomal protein uS11 family. Part of the 30S ribosomal subunit. Interacts with proteins S7 and S18. Binds to IF-3.

Its function is as follows. Located on the platform of the 30S subunit, it bridges several disparate RNA helices of the 16S rRNA. Forms part of the Shine-Dalgarno cleft in the 70S ribosome. The polypeptide is Small ribosomal subunit protein uS11 (Chlorobium phaeobacteroides (strain BS1)).